The primary structure comprises 1409 residues: MKSLLDLFKQFTPDEHFDAIKIGLASPEKIRSWSFGEVKKPETINYRTFKPERDGLFCAKIFGPIKDYECLCGKYKRLKHRGVICEKCGVEVTQTKVRRERMGHIDLAAPCAHIWFLKSLPSRLGLVLDMTLRDIERVLYFEAYVVTDPGMTPLKKFSIMTEDDYEAKRTEYGDEFEAKMGAEGIKDLLEGIDIDVETERLRGDLTGSEVKVKKNAKRLKLLEAFKKSGIKPGWMVMEVLPVLPPDLRPLVPLDGGRFATSDLNDLYRRVINRNSRLRRLLELKAPEIIARNEKRMLQEAVDSLLDNGRRGKAMTGANKRALKSLADMIKGKSGRFRQNLLGKRVDYSGRSVITVGPYLKLHQCGLPKLMALELFKPFIFAQLEQRGIATTIKAAKKEVESGTPVVWDILEEVIKEHPVMLNRAPTLHRLGIQAFEPILIEGKAIQLHPLVCAAFNADFDGDQMAVHVPLSVEAQMEARTLMLASNNVLFPASGEPSIVPSQDVVLGLYHATRERINGKGEGMIFADIGEVQRALDSDQVELAAKISVRLTEWTKNKDSGEFEPSTSLVETTVGRALMSEILPKGLPFSHMNKALKKKEISKLINASFRKCGLKATVVFADKLLQNGFRLSTHAGISIAIGDMLVPPQKAEIIGRAEAEVKEIEQQYVSGLVTAGERYNKVVDIWGKAGDEVSKVMMAQLAKEKVIDRHGNEVEQESFNAIYMMADSGARGSAAQIRQLAGMRGLMAKPDGSIIETPITANFREGLNVLQYFISTHGARKGLADTALKTANSGYLTRRLVDVTQDLVVNEDDCGTTNGALMRAIVEGGEVIESLRDRVLGRTTAEDVVHPETLAVLLPAGTLLNEDGIDELELQGVDEIKVRTALTCETRYGLCAKCYGRDLGRGGLINLGEAVGVIAAQSIGEPGTQLTMRTFHIGGAASRAAIASSVEAKSNGSISFNSTMRYVSNTKGELVVISRSGEIVISDNGRERERHKVPYGAVLTVRPDQQVKAGLILANWDPLTRPIITEYAGQVRFENVEEGLTVAKQVDEVTGLSTLVVIDPKRRGSAKVVRPQVKLIDANNQEVKIPGTDHSVTIGFQVGALIQVRDGQDVGPGEVLARIPVEGQKTRDITGGLPRVAELFEARTPKDKGTLAEMTGTISFGKETKGKVRMQITDLDGKVWEELVPKEKNILVHEGQVVNKGESIVDGPADPQDILRLLGIEELSRYIVDEVQDVYRLQGVKINDKHIEVIVRQMLRRVVVENTGDSTYIAGEQVERSEILNTNEALQREGKIPATYSNVLLGITKASLSTDSFISAASFQETTRVLTEAAIMGKRDELRGLKENVIVGRLIPAGTGLAYHQARKAKDAMDDAERRAIADAEAAELAGVMADDDTAAVSVAGDASAD.

Residues cysteine 70, cysteine 72, cysteine 85, and cysteine 88 each coordinate Zn(2+). 3 residues coordinate Mg(2+): aspartate 458, aspartate 460, and aspartate 462. The Zn(2+) site is built by cysteine 813, cysteine 887, cysteine 894, and cysteine 897.

Belongs to the RNA polymerase beta' chain family. As to quaternary structure, the RNAP catalytic core consists of 2 alpha, 1 beta, 1 beta' and 1 omega subunit. When a sigma factor is associated with the core the holoenzyme is formed, which can initiate transcription. The cofactor is Mg(2+). It depends on Zn(2+) as a cofactor.

The catalysed reaction is RNA(n) + a ribonucleoside 5'-triphosphate = RNA(n+1) + diphosphate. Its function is as follows. DNA-dependent RNA polymerase catalyzes the transcription of DNA into RNA using the four ribonucleoside triphosphates as substrates. In Delftia acidovorans (strain DSM 14801 / SPH-1), this protein is DNA-directed RNA polymerase subunit beta'.